We begin with the raw amino-acid sequence, 397 residues long: CCA-adding enzyme (397 aa).

Residues Gly27 and Arg30 each coordinate ATP. The CTP site is built by Gly27 and Arg30. Residues Asp40 and Asp42 each coordinate Mg(2+). Positions 111, 154, 157, 160, and 163 each coordinate ATP. CTP-binding residues include Arg111, Asp154, Arg157, Arg160, and Arg163.

Belongs to the tRNA nucleotidyltransferase/poly(A) polymerase family. Bacterial CCA-adding enzyme type 3 subfamily. As to quaternary structure, homodimer. The cofactor is Mg(2+).

It catalyses the reaction a tRNA precursor + 2 CTP + ATP = a tRNA with a 3' CCA end + 3 diphosphate. The enzyme catalyses a tRNA with a 3' CCA end + 2 CTP + ATP = a tRNA with a 3' CCACCA end + 3 diphosphate. Its function is as follows. Catalyzes the addition and repair of the essential 3'-terminal CCA sequence in tRNAs without using a nucleic acid template. Adds these three nucleotides in the order of C, C, and A to the tRNA nucleotide-73, using CTP and ATP as substrates and producing inorganic pyrophosphate. tRNA 3'-terminal CCA addition is required both for tRNA processing and repair. Also involved in tRNA surveillance by mediating tandem CCA addition to generate a CCACCA at the 3' terminus of unstable tRNAs. While stable tRNAs receive only 3'-terminal CCA, unstable tRNAs are marked with CCACCA and rapidly degraded. The sequence is that of CCA-adding enzyme from Anoxybacillus flavithermus (strain DSM 21510 / WK1).